Consider the following 243-residue polypeptide: 3-deoxy-manno-octulosonate cytidylyltransferase (243 aa).

The protein belongs to the KdsB family.

The protein resides in the cytoplasm. It catalyses the reaction 3-deoxy-alpha-D-manno-oct-2-ulosonate + CTP = CMP-3-deoxy-beta-D-manno-octulosonate + diphosphate. The protein operates within nucleotide-sugar biosynthesis; CMP-3-deoxy-D-manno-octulosonate biosynthesis; CMP-3-deoxy-D-manno-octulosonate from 3-deoxy-D-manno-octulosonate and CTP: step 1/1. It functions in the pathway bacterial outer membrane biogenesis; lipopolysaccharide biosynthesis. Its function is as follows. Activates KDO (a required 8-carbon sugar) for incorporation into bacterial lipopolysaccharide in Gram-negative bacteria. The sequence is that of 3-deoxy-manno-octulosonate cytidylyltransferase from Helicobacter acinonychis (strain Sheeba).